Reading from the N-terminus, the 115-residue chain is Type 3 secretion system chaperone PscG (115 aa).

The protein belongs to the YscG family. In terms of assembly, forms a stable heterotrimeric complex with PscE and PscF/SctF in the cytoplasm. Co-stabilized by PscE.

Its subcellular location is the cytoplasm. In terms of biological role, chaperone of the type III secretion system (T3SS), also called injectisome, which is used to inject bacterial effector proteins into eukaryotic host cells, facilitating the establishment and dissemination of infection. Along with PscE, prevents premature polymerization of the PscF/SctF needle protein within the cytoplasm. Required for type III secretion needle assembly. Also required for cytotoxicity by influencing PscF/SctF levels. This Pseudomonas aeruginosa (strain ATCC 15692 / DSM 22644 / CIP 104116 / JCM 14847 / LMG 12228 / 1C / PRS 101 / PAO1) protein is Type 3 secretion system chaperone PscG (pscG).